A 618-amino-acid chain; its full sequence is Nuclear RNA export factor 1 (618 aa).

Positions 1–15 (MADEGKSYNEHDDRV) are enriched in basic and acidic residues. The interval 1 to 113 (MADEGKSYNE…RGGAGTSQDG (113 aa)) is disordered. Alanine 2 carries the post-translational modification N-acetylalanine. The minor non-specific RNA-binding stretch occupies residues 2–59 (ADEGKSYNEHDDRVSFPQRRKKGRGPFRWKCGVGNRRSGRGGSGIRSSRFEEDDGDVA). Residues 2–117 (ADEGKSYNEH…GTSQDGTTKN (116 aa)) are RNA-binding (RBD). Residues 2-197 (ADEGKSYNEH…IIINSSAPPY (196 aa)) are interaction with ALYREF/THOC4 and LUZP4. Positions 19-28 (QRRKKGRGPF) are enriched in basic residues. Arginine 41 bears the Asymmetric dimethylarginine; alternate mark. Arginine 41 bears the Omega-N-methylarginine; alternate mark. A major non-specific RNA-binding region spans residues 60 to 117 (MNDPQDGPRVRFNPYTTRPNRRRDTWHDRDRIHVTVRRDRAPQERGGAGTSQDGTTKN). Residues 60–117 (MNDPQDGPRVRFNPYTTRPNRRRDTWHDRDRIHVTVRRDRAPQERGGAGTSQDGTTKN) form an RNA binding region. A Nuclear localization signal motif is present at residues 66–99 (GPRVRFNPYTTRPNRRRDTWHDRDRIHVTVRRDR). Residues 81 to 102 (RRDTWHDRDRIHVTVRRDRAPQ) show a composition bias toward basic and acidic residues. The short motif at 82-109 (RDTWHDRDRIHVTVRRDRAPQERGGAGT) is the Nuclear export signal element. Residues 118–197 (WFKITIPYGK…IIINSSAPPY (80 aa)) enclose the RRM domain. Tyrosine 125 bears the 3'-nitrotyrosine mark. 4 LRR repeats span residues 265–290 (ELLS…QKAP), 291–314 (NLKI…IKGL), 315–342 (KLEE…TIRE), and 343–370 (RFPK…TMLP). The NTF2 domain occupies 385–535 (LVLHFLQQYY…LCIVNDELFV (151 aa)). A TAP-C domain is found at 564 to 618 (QEQQDMLQAFSTQSGMNLEWSQKCLQDNNWDYTRSAQAFTHLKAKGEIPEVAFMK).

Belongs to the NXF family. As to quaternary structure, heterodimer (via NTF2 domain) with NXT1. The formation of NXF1-NXT1 heterodimers is required for the NXF1-mediated nuclear mRNA export. Forms a complex with RANBP2/NUP358, NXT1 and RANGAP1. Associates with the exon junction complex (EJC). Associates with the transcription/export (TREX) complex. Found in a mRNA complex with UPF3A and UPF3B. Found in a post-splicing complex with RBM8A, UPF1, UPF2, UPF3A, UPF3B and RNPS1. Interacts (via N-terminus) with DHX9 (via N-terminus); this interaction is direct and negatively regulates NXF1-mediated nuclear export of constitutive transport element (CTE)-containing cellular mRNAs. Interacts with FYTTD1/UIF. Interacts with EIF4A3. Interacts with NUP42. Interacts with ALYREF/THOC4. Interacts with CHTOP. Interacts with FRG1 (via N-terminus). Interacts with LUZP4. Interacts with FMR1; the interaction occurs in a mRNA-dependent and polyribosomes-independent manner in the nucleus. Interacts with CPSF6 (via N-terminus); this interaction is direct. Interacts with RBM15. Interacts with RBM15B. Interacts with MCM3AP; this interaction is not mediated by RNA. Interacts with DDX3X (via C-terminus); this interaction may be partly involved in DDX3X nuclear export and in NXF1 localization to stress granules. Interacts with PABPC1/PABP1.

It localises to the nucleus. The protein resides in the nucleoplasm. It is found in the nucleus speckle. Its subcellular location is the nuclear pore complex. The protein localises to the nucleus envelope. It localises to the cytoplasm. The protein resides in the stress granule. In terms of biological role, involved in the nuclear export of mRNA species bearing retroviral constitutive transport elements (CTE) and in the export of mRNA from the nucleus to the cytoplasm (TAP/NFX1 pathway). The NXF1-NXT1 heterodimer is involved in the export of HSP70 mRNA in conjunction with ALYREF/THOC4 and THOC5 components of the TREX complex. ALYREF/THOC4-bound mRNA is thought to be transferred to the NXF1-NXT1 heterodimer for export. Also involved in nuclear export of m6A-containing mRNAs: interaction between SRSF3 and YTHDC1 facilitates m6A-containing mRNA-binding to both SRSF3 and NXF1, promoting mRNA nuclear export. In Rattus norvegicus (Rat), this protein is Nuclear RNA export factor 1 (Nxf1).